Consider the following 154-residue polypeptide: MGLSDGEWQLVLHVWGKVEADLAGHGQDVLIRLFKAHPETLEKFDKFKHIKSEDEMKGSEDLKKHGBTVLTALGGILKKKGHHEAEIKPLAQSHATKHKIPIKYLEFISEAIIHVLZSKHPSBFGADVZGAMKRALELFRNDIAAKYKELGFQG.

In terms of domain architecture, Globin spans 2–148 (GLSDGEWQLV…FRNDIAAKYK (147 aa)). Ser4 carries the post-translational modification Phosphoserine. Nitrite is bound at residue His65. His65 contacts O2. Thr68 bears the Phosphothreonine mark. Residue His94 participates in heme b binding.

The protein belongs to the globin family. Monomeric.

It localises to the cytoplasm. The protein localises to the sarcoplasm. It carries out the reaction Fe(III)-heme b-[protein] + nitric oxide + H2O = Fe(II)-heme b-[protein] + nitrite + 2 H(+). The catalysed reaction is H2O2 + AH2 = A + 2 H2O. Functionally, monomeric heme protein which primary function is to store oxygen and facilitate its diffusion within muscle tissues. Reversibly binds oxygen through a pentacoordinated heme iron and enables its timely and efficient release as needed during periods of heightened demand. Depending on the oxidative conditions of tissues and cells, and in addition to its ability to bind oxygen, it also has a nitrite reductase activity whereby it regulates the production of bioactive nitric oxide. Under stress conditions, like hypoxia and anoxia, it also protects cells against reactive oxygen species thanks to its pseudoperoxidase activity. This chain is Myoglobin (MB), found in Ondatra zibethicus (Muskrat).